A 560-amino-acid polypeptide reads, in one-letter code: 5'-nucleotidase (560 aa).

Positions 1–21 (MNQRLIIKTALSAAILASLAG) are cleaved as a signal peptide. Cysteine 22 carries the N-palmitoyl cysteine lipid modification. Residue cysteine 22 is the site of S-diacylglycerol cysteine attachment. Positions 45, 47, 88, 120, 221, 256, and 258 each coordinate a divalent metal cation. Substrate is bound by residues phenylalanine 432 and 501–507 (YNASGGD).

Belongs to the 5'-nucleotidase family. Requires chloride as cofactor. Mg(2+) serves as cofactor.

Its subcellular location is the cell outer membrane. It carries out the reaction a ribonucleoside 5'-phosphate + H2O = a ribonucleoside + phosphate. Its function is as follows. Degradation of extracellular 5'-nucleotides for nutritional needs. The polypeptide is 5'-nucleotidase (nutA) (Vibrio parahaemolyticus serotype O3:K6 (strain RIMD 2210633)).